The sequence spans 481 residues: 2-succinylbenzoate--CoA ligase (481 aa).

It belongs to the ATP-dependent AMP-binding enzyme family. MenE subfamily.

It catalyses the reaction 2-succinylbenzoate + ATP + CoA = 2-succinylbenzoyl-CoA + AMP + diphosphate. It functions in the pathway quinol/quinone metabolism; 1,4-dihydroxy-2-naphthoate biosynthesis; 1,4-dihydroxy-2-naphthoate from chorismate: step 5/7. Its pathway is quinol/quinone metabolism; menaquinone biosynthesis. In terms of biological role, converts 2-succinylbenzoate (OSB) to 2-succinylbenzoyl-CoA (OSB-CoA). The chain is 2-succinylbenzoate--CoA ligase from Bacillus cereus (strain ATCC 10987 / NRS 248).